The chain runs to 606 residues: DNA primase (606 aa).

A CHC2-type zinc finger spans residues 40-64 (CPFHQEKTPSFYVVPEKRFYFCHGC). The region spanning 256–349 (KAAVLVEGYF…DPDTFARREG (94 aa)) is the Toprim domain. Residues E262, D307, and D309 each coordinate Mg(2+). The disordered stretch occupies residues 429 to 451 (VPLPKPAGGDAPPSSPNRPAPPL). Over residues 441 to 451 (PSSPNRPAPPL) the composition is skewed to pro residues.

It belongs to the DnaG primase family. In terms of assembly, monomer. Interacts with DnaB. It depends on Zn(2+) as a cofactor. Mg(2+) serves as cofactor.

It carries out the reaction ssDNA + n NTP = ssDNA/pppN(pN)n-1 hybrid + (n-1) diphosphate.. In terms of biological role, RNA polymerase that catalyzes the synthesis of short RNA molecules used as primers for DNA polymerase during DNA replication. The sequence is that of DNA primase from Myxococcus xanthus.